The following is a 238-amino-acid chain: Ribosomal RNA small subunit methyltransferase G (238 aa).

S-adenosyl-L-methionine-binding positions include Gly-79, Phe-84, 102–104 (EAT), 130–131 (IE), and Arg-149.

Belongs to the methyltransferase superfamily. RNA methyltransferase RsmG family.

The protein resides in the cytoplasm. Functionally, specifically methylates the N7 position of a guanine in 16S rRNA. This chain is Ribosomal RNA small subunit methyltransferase G, found in Chloroflexus aggregans (strain MD-66 / DSM 9485).